A 138-amino-acid polypeptide reads, in one-letter code: Large ribosomal subunit protein uL16 (138 aa).

Residues methionine 1 to glycine 19 are compositionally biased toward basic residues. Residues methionine 1–glycine 24 form a disordered region.

It belongs to the universal ribosomal protein uL16 family. Part of the 50S ribosomal subunit.

Binds 23S rRNA and is also seen to make contacts with the A and possibly P site tRNAs. The sequence is that of Large ribosomal subunit protein uL16 from Mycobacteroides abscessus (strain ATCC 19977 / DSM 44196 / CCUG 20993 / CIP 104536 / JCM 13569 / NCTC 13031 / TMC 1543 / L948) (Mycobacterium abscessus).